We begin with the raw amino-acid sequence, 921 residues long: MDFKDTLLMPKTDFPMRGNLPNREPDIQKKWEEEDIYRLVQERTKDRPKFVLHDGPPYANGDIHMGHALNKILKDFIVRYKSMSGYNAPYVPGWDTHGLPIETALTKNKKVNRKEMSVAEFRKLCEEYAWKQIEGQREQFKRLGVRGDWENPYVTLKPEYEAQQIRVFGEMAKRGYIYKGLKPVNWSPSSESALAEAEIEYQDKRSASIYVAFGVKDGKGVLENGERIIIWTTTPWTIPANLGISVHPDLEYSVIAVGEDRFVVASALVENVASACGFDQYEVTRTVKGKDLENIIAEHPLYGRDSLVMLGEHVTTDAGTGCVHTAPGHGEDDFIIGQKYGLDVLCPVDEKGVMTSEAPGFEGMFYDDANKAITQQLDEKGALVKLEFITHSYPHDWRTKKPTIFRATAQWFASIKDFRSDLLDAIKETKWVPEWGEQRLHNMVRDRGDWCISRQRAWGVPIPVFYAENGEPVITDETIEHVSELFRQHGSNIWFEKEAKDLLPEGFTHPGSPNGTFTKEQDIMDVWFDSGSSHQAVLEERDDLVRPADLYLEGSDQYRGWFNSSLSTAVAVTGKAPYKGVLSHGFALDGEGRKMSKSIGNVVVPAKVMKQLGADILRLWVSSVDYQADVRVSDAILKQVAEVYRKIRNTFRFLHGNLFDFDPKTNAVAVEDLREVDQYMLIKLNKLIDKVKKAYDEYEFAVVYHSIHNFCTIELSSFYLDFAKDIVYIEHADHPDRRSMQTVFYETLLALVKLSAPILPHTADELWSHLTFVEEQSVQLTDMPETITVPNSEATEEKFDRFMALRDDVLKALETARNEKIIGKSLEANLKLYPNKENKELLASIKENLSQLFIVSELTISEENEAPNDAQSFATGKIAVEKAEGEMCERSRVISKDVGANPKYPTLSLRNAEIVEKYYQK.

A 'HIGH' region motif is present at residues 57–67; the sequence is PYANGDIHMGH. Glutamate 553 lines the L-isoleucyl-5'-AMP pocket. The 'KMSKS' region signature appears at 594 to 598; it reads KMSKS. Position 597 (lysine 597) interacts with ATP.

Belongs to the class-I aminoacyl-tRNA synthetase family. IleS type 1 subfamily. As to quaternary structure, monomer.

Its subcellular location is the cytoplasm. It catalyses the reaction tRNA(Ile) + L-isoleucine + ATP = L-isoleucyl-tRNA(Ile) + AMP + diphosphate. Functionally, catalyzes the attachment of isoleucine to tRNA(Ile). As IleRS can inadvertently accommodate and process structurally similar amino acids such as valine, to avoid such errors it has two additional distinct tRNA(Ile)-dependent editing activities. One activity is designated as 'pretransfer' editing and involves the hydrolysis of activated Val-AMP. The other activity is designated 'posttransfer' editing and involves deacylation of mischarged Val-tRNA(Ile). This is Isoleucine--tRNA ligase from Bacillus subtilis (strain 168).